The following is a 313-amino-acid chain: Formimidoylglutamase (313 aa).

Positions 130, 155, 157, 159, 241, and 243 each coordinate Mn(2+).

It belongs to the arginase family. It depends on Mn(2+) as a cofactor.

It catalyses the reaction N-formimidoyl-L-glutamate + H2O = formamide + L-glutamate. It participates in amino-acid degradation; L-histidine degradation into L-glutamate; L-glutamate from N-formimidoyl-L-glutamate (hydrolase route): step 1/1. Catalyzes the conversion of N-formimidoyl-L-glutamate to L-glutamate and formamide. The chain is Formimidoylglutamase from Salmonella newport (strain SL254).